The sequence spans 125 residues: Small ribosomal subunit protein uS12 (125 aa).

At Asp-89 the chain carries 3-methylthioaspartic acid. A disordered region spans residues 100–125 (GSLDTQGVKDRKQSRSKYGAKRPKAA). Residues 113 to 125 (SRSKYGAKRPKAA) show a composition bias toward basic residues.

Belongs to the universal ribosomal protein uS12 family. In terms of assembly, part of the 30S ribosomal subunit. Contacts proteins S8 and S17. May interact with IF1 in the 30S initiation complex.

With S4 and S5 plays an important role in translational accuracy. Functionally, interacts with and stabilizes bases of the 16S rRNA that are involved in tRNA selection in the A site and with the mRNA backbone. Located at the interface of the 30S and 50S subunits, it traverses the body of the 30S subunit contacting proteins on the other side and probably holding the rRNA structure together. The combined cluster of proteins S8, S12 and S17 appears to hold together the shoulder and platform of the 30S subunit. The chain is Small ribosomal subunit protein uS12 from Dechloromonas aromatica (strain RCB).